A 127-amino-acid polypeptide reads, in one-letter code: Apolipoprotein C-IV (127 aa).

A signal peptide spans 1 to 27 (MSLLRNRLQDLPALCLCVLVLACIGAC). A glycan (N-linked (GlcNAc...) asparagine) is linked at Asn63.

Belongs to the apolipoprotein C4 family.

The protein localises to the secreted. Its function is as follows. May participate in lipoprotein metabolism. The chain is Apolipoprotein C-IV (APOC4) from Colobus guereza (Mantled guereza).